Here is an 815-residue protein sequence, read N- to C-terminus: MEPSTCRTMESEEDYVEEKESEKCVKEGVTNPSNSSQQALLKADYKALKNGVPSPIMATKIPKKVIAPVDTGDLEAGRRKRRRKRRSLAINLTNCKYESVRRAAQMCGLKEVGEDEEWTLYWTDCAVSLERVMDMKRFQKINHFPGMTEICRKDLLARNLNRMYKLYPSEYNIFPRTWCLPADYGDFQSYGRQRKARTYICKPDSGCQGRGIFITRNPREIKPGEHMICQQYISKPLLIDGFKFDMRVYVLITSCDPLRIFTYEEGLARFATTPYMEPSHNNLDNVCMHLTNYAINKHNENFVRDGAVGSKRKLSTLNIWLQEHSYNPGELWGDIEDIIIKTIISAHSVLRHNYRTCFPQYLNGGTCACFEILGFDILLDHKLKPWLLEVNHSPSFTTDSCLDQEVKDALLCDAMTLVNLRGCDKRKVMEEDKRRVKERLFQCYRQPRESRKEKTESSHVAMLDQERYEDSHLGKYRRIYPGPDTEKYARFFKHNGSLFQETAASKAREECARQQLEEIRLKQEQQETSGTKRQKARDQNQGESAGEKSRPRAGLQSLSTHLAYRNRNWEKELLPGQLDTMRPQEIVEEEELERMKALLQRETLIRSLGIVEQLTRLQHPGPQGQKKLHESRDRLGSQELKSMSLVLLVLLRGAATEQGAPHFLHPVLPHESIPRILGALPSMNAAIPHVPRYHLQPKNFNWTGEPAAINSCSLSMKKAGRCYFSSARIRLTSQGQASRRLEAINRVLAGSVPPTLTPKQGYFLQPERVASDSWTECTLPSMVNSEHRAAKVPLCPASAPMLQRSRALLNINQFR.

A TTL domain is found at 85–430 (RRSLAINLTN…RGCDKRKVME (346 aa)). ATP-binding positions include lysine 202, 208 to 209 (QG), 230 to 233 (QQYI), and 243 to 245 (KFD). Glutamine 208 serves as a coordination point for a protein. Arginine 269 serves as a coordination point for L-glutamate. 291 to 292 (TN) contacts ATP. Residues tyrosine 293 and lysine 311 each contribute to the L-glutamate site. 3 residues coordinate Mg(2+): aspartate 376, glutamate 389, and asparagine 391. The interval 401–482 (CLDQEVKDAL…LGKYRRIYPG (82 aa)) is c-MTBD region. Lysine 407 is a binding site for L-glutamate. Residues 504–528 (ASKAREECARQQLEEIRLKQEQQET) adopt a coiled-coil conformation. The segment at 520–556 (RLKQEQQETSGTKRQKARDQNQGESAGEKSRPRAGLQ) is disordered. Residues 536–550 (ARDQNQGESAGEKSR) show a composition bias toward basic and acidic residues.

This sequence belongs to the tubulin--tyrosine ligase family. It depends on Mg(2+) as a cofactor.

The enzyme catalyses (L-glutamyl)(n)-gamma-L-glutamyl-L-glutamyl-[protein] + L-glutamate + ATP = (L-glutamyl)(n+1)-gamma-L-glutamyl-L-glutamyl-[protein] + ADP + phosphate + H(+). Functionally, polyglutamylase which modifies tubulin, generating polyglutamate side chains of variable lengths on the gamma-carboxyl group of specific glutamate residues within the C-terminal tail of tubulin. Mediates ATP-dependent polyglutamate side-chain elongation of the polyglutamylation reaction but not the initiation step. Preferentially modifies the alpha-tubulin tail over a beta-tail. This chain is Tubulin polyglutamylase TTLL13, found in Homo sapiens (Human).